Reading from the N-terminus, the 117-residue chain is Zinc metalloproteinase/disintegrin (117 aa).

The Disintegrin domain maps to 36–117; the sequence is TPVSGNELLE…AGCPRNPFHA (82 aa). 6 disulfides stabilise this stretch: Cys-50/Cys-65, Cys-52/Cys-60, Cys-59/Cys-82, Cys-73/Cys-79, Cys-78/Cys-103, and Cys-91/Cys-110. The short motif at 95–97 is the Cell attachment site element; it reads RGD.

This sequence belongs to the venom metalloproteinase (M12B) family. P-II subfamily. P-IIa sub-subfamily. Monomer. The cofactor is Zn(2+). Expressed by the venom gland.

It localises to the secreted. Impairs hemostasis in the envenomed animal. Functionally, inhibits platelet aggregation and bone resorption. The chain is Zinc metalloproteinase/disintegrin from Gloydius halys (Chinese water mocassin).